A 542-amino-acid polypeptide reads, in one-letter code: MKKGAMQKSKQWNVKGAVRLASVFHFLHSCGSGCLLPFLTLYFRHLGLSAAMIGIIMASKHLLALLWRPFSSVLARQYDKRRTVIVGSLLSSALVVLPLLLFPSAGILVESGRCNTSQPDADPTLPLAVIEQMTVPVGSNATVYSVNQTSVSTNQTLEDNTLVNHSRSARGLRSLKKEEEPHSEFLGSLKVMDAQHQMFFLVLLVTALWEFVAVPLEWTADDGLYEYLDFVDATDRHSGVKVWKHVGAAFGSCLVGVLVTNLFCRIGNSVEFYSYTVLMILTVPASALLPIYLRKRERPTSGGFKALQLVHGNPQAILCAVTVILTGMVTSAVSDFLLWLMQDCGAMEIHMGICLALAHLSHTGFSPIAGPLSRFLKYHGWMLVLAVVGLAMQCLYYSFLWSPWAVMPAQLLAGFSTGALWWSVTSQSEDIATPGTEKTILRLFEAFSLDMGAALGSLIAGFVVQKFGVNVLFQGASVMLAVWSSALAVLKWKIPRQRRINYSRLLAADTEVSESESDQEKDWLETAMEDDRRNNKWTVNKS.

The next 11 membrane-spanning stretches (helical) occupy residues 46–66, 89–109, 198–218, 246–266, 272–292, 321–341, 352–372, 381–401, 404–424, 444–464, and 469–489; these read LGLS…LALL, LLSS…GILV, MFFL…PLEW, VGAA…FCRI, FYSY…LPIY, VTVI…LWLM, GICL…AGPL, WMLV…SFLW, WAVM…WWSV, FEAF…GFVV, and VNVL…ALAV.

Belongs to the major facilitator superfamily. MFSD6 family.

The protein resides in the membrane. This chain is Major facilitator superfamily domain-containing protein 6-like (mfsd6l), found in Danio rerio (Zebrafish).